The chain runs to 261 residues: Cytochrome c oxidase subunit 3 (261 aa).

Residues Met-1 to Pro-15 are Mitochondrial matrix-facing. A helical transmembrane segment spans residues Trp-16–Trp-34. Residues Phe-35–Leu-40 are Mitochondrial intermembrane-facing. A helical transmembrane segment spans residues Thr-41–Thr-66. Topologically, residues Phe-67–Thr-72 are mitochondrial matrix. The helical transmembrane segment at Pro-73–Ser-105 threads the bilayer. Residues Leu-106–Glu-128 are Mitochondrial intermembrane-facing. The helical transmembrane segment at Val-129–Met-152 threads the bilayer. Topologically, residues Glu-153–Glu-155 are mitochondrial matrix. The helical transmembrane segment at Arg-156 to Glu-183 threads the bilayer. Over Ala-184–Asp-190 the chain is Mitochondrial intermembrane. A helical membrane pass occupies residues Gly-191–Val-223. The Mitochondrial matrix segment spans residues Gln-224–His-232. Residues Phe-233–Ile-256 form a helical membrane-spanning segment. Residues Tyr-257–Ser-261 lie on the Mitochondrial intermembrane side of the membrane.

Belongs to the cytochrome c oxidase subunit 3 family. As to quaternary structure, component of the cytochrome c oxidase (complex IV, CIV), a multisubunit enzyme composed of 14 subunits. The complex is composed of a catalytic core of 3 subunits MT-CO1, MT-CO2 and MT-CO3, encoded in the mitochondrial DNA, and 11 supernumerary subunits COX4I, COX5A, COX5B, COX6A, COX6B, COX6C, COX7A, COX7B, COX7C, COX8 and NDUFA4, which are encoded in the nuclear genome. The complex exists as a monomer or a dimer and forms supercomplexes (SCs) in the inner mitochondrial membrane with NADH-ubiquinone oxidoreductase (complex I, CI) and ubiquinol-cytochrome c oxidoreductase (cytochrome b-c1 complex, complex III, CIII), resulting in different assemblies (supercomplex SCI(1)III(2)IV(1) and megacomplex MCI(2)III(2)IV(2)).

It localises to the mitochondrion inner membrane. It carries out the reaction 4 Fe(II)-[cytochrome c] + O2 + 8 H(+)(in) = 4 Fe(III)-[cytochrome c] + 2 H2O + 4 H(+)(out). Functionally, component of the cytochrome c oxidase, the last enzyme in the mitochondrial electron transport chain which drives oxidative phosphorylation. The respiratory chain contains 3 multisubunit complexes succinate dehydrogenase (complex II, CII), ubiquinol-cytochrome c oxidoreductase (cytochrome b-c1 complex, complex III, CIII) and cytochrome c oxidase (complex IV, CIV), that cooperate to transfer electrons derived from NADH and succinate to molecular oxygen, creating an electrochemical gradient over the inner membrane that drives transmembrane transport and the ATP synthase. Cytochrome c oxidase is the component of the respiratory chain that catalyzes the reduction of oxygen to water. Electrons originating from reduced cytochrome c in the intermembrane space (IMS) are transferred via the dinuclear copper A center (CU(A)) of subunit 2 and heme A of subunit 1 to the active site in subunit 1, a binuclear center (BNC) formed by heme A3 and copper B (CU(B)). The BNC reduces molecular oxygen to 2 water molecules using 4 electrons from cytochrome c in the IMS and 4 protons from the mitochondrial matrix. In Oncorhynchus mykiss (Rainbow trout), this protein is Cytochrome c oxidase subunit 3 (mt-co3).